The sequence spans 418 residues: UDP-N-acetylglucosamine 1-carboxyvinyltransferase (418 aa).

22 to 23 (KN) lines the phosphoenolpyruvate pocket. R91 contacts UDP-N-acetyl-alpha-D-glucosamine. C115 (proton donor) is an active-site residue. At C115 the chain carries 2-(S-cysteinyl)pyruvic acid O-phosphothioketal. Residues 120–124 (RPVDL), D305, and I327 contribute to the UDP-N-acetyl-alpha-D-glucosamine site.

The protein belongs to the EPSP synthase family. MurA subfamily.

The protein resides in the cytoplasm. It carries out the reaction phosphoenolpyruvate + UDP-N-acetyl-alpha-D-glucosamine = UDP-N-acetyl-3-O-(1-carboxyvinyl)-alpha-D-glucosamine + phosphate. The protein operates within cell wall biogenesis; peptidoglycan biosynthesis. Functionally, cell wall formation. Adds enolpyruvyl to UDP-N-acetylglucosamine. The protein is UDP-N-acetylglucosamine 1-carboxyvinyltransferase of Wigglesworthia glossinidia brevipalpis.